Consider the following 339-residue polypeptide: Biotin synthase (339 aa).

The Radical SAM core domain occupies 51–278 (TEVELATLLS…KARVRLSAGR (228 aa)). [4Fe-4S] cluster is bound by residues Cys66, Cys70, and Cys73. Positions 110, 141, 201, and 273 each coordinate [2Fe-2S] cluster.

It belongs to the radical SAM superfamily. Biotin synthase family. Homodimer. [4Fe-4S] cluster serves as cofactor. The cofactor is [2Fe-2S] cluster.

The catalysed reaction is (4R,5S)-dethiobiotin + (sulfur carrier)-SH + 2 reduced [2Fe-2S]-[ferredoxin] + 2 S-adenosyl-L-methionine = (sulfur carrier)-H + biotin + 2 5'-deoxyadenosine + 2 L-methionine + 2 oxidized [2Fe-2S]-[ferredoxin]. It functions in the pathway cofactor biosynthesis; biotin biosynthesis; biotin from 7,8-diaminononanoate: step 2/2. Its function is as follows. Catalyzes the conversion of dethiobiotin (DTB) to biotin by the insertion of a sulfur atom into dethiobiotin via a radical-based mechanism. This Janthinobacterium sp. (strain Marseille) (Minibacterium massiliensis) protein is Biotin synthase.